Consider the following 197-residue polypeptide: Imidazoleglycerol-phosphate dehydratase (197 aa).

Belongs to the imidazoleglycerol-phosphate dehydratase family.

It is found in the cytoplasm. It catalyses the reaction D-erythro-1-(imidazol-4-yl)glycerol 3-phosphate = 3-(imidazol-4-yl)-2-oxopropyl phosphate + H2O. The protein operates within amino-acid biosynthesis; L-histidine biosynthesis; L-histidine from 5-phospho-alpha-D-ribose 1-diphosphate: step 6/9. This chain is Imidazoleglycerol-phosphate dehydratase, found in Azorhizobium caulinodans (strain ATCC 43989 / DSM 5975 / JCM 20966 / LMG 6465 / NBRC 14845 / NCIMB 13405 / ORS 571).